Here is a 167-residue protein sequence, read N- to C-terminus: uncharacterized protein (167 aa).

A signal peptide spans 1-25; the sequence is MPFSVTKFSLIFVALLLAEALVAQS.

This is an uncharacterized protein from Caenorhabditis elegans.